We begin with the raw amino-acid sequence, 126 residues long: Phosphoribosyl-AMP cyclohydrolase (126 aa).

Aspartate 76 lines the Mg(2+) pocket. Residue cysteine 77 coordinates Zn(2+). Residues aspartate 78 and aspartate 80 each contribute to the Mg(2+) site. Positions 94 and 101 each coordinate Zn(2+).

The protein belongs to the PRA-CH family. As to quaternary structure, homodimer. The cofactor is Mg(2+). Zn(2+) serves as cofactor.

It localises to the cytoplasm. The enzyme catalyses 1-(5-phospho-beta-D-ribosyl)-5'-AMP + H2O = 1-(5-phospho-beta-D-ribosyl)-5-[(5-phospho-beta-D-ribosylamino)methylideneamino]imidazole-4-carboxamide. Its pathway is amino-acid biosynthesis; L-histidine biosynthesis; L-histidine from 5-phospho-alpha-D-ribose 1-diphosphate: step 3/9. Functionally, catalyzes the hydrolysis of the adenine ring of phosphoribosyl-AMP. The sequence is that of Phosphoribosyl-AMP cyclohydrolase from Vesicomyosocius okutanii subsp. Calyptogena okutanii (strain HA).